The primary structure comprises 317 residues: Ribonuclease Z (317 aa).

Residues H63, H65, D67, H68, H143, D214, and H272 each coordinate Zn(2+). Residue D67 is the Proton acceptor of the active site.

The protein belongs to the RNase Z family. In terms of assembly, homodimer. It depends on Zn(2+) as a cofactor.

It catalyses the reaction Endonucleolytic cleavage of RNA, removing extra 3' nucleotides from tRNA precursor, generating 3' termini of tRNAs. A 3'-hydroxy group is left at the tRNA terminus and a 5'-phosphoryl group is left at the trailer molecule.. In terms of biological role, zinc phosphodiesterase, which displays some tRNA 3'-processing endonuclease activity. Probably involved in tRNA maturation, by removing a 3'-trailer from precursor tRNA. The polypeptide is Ribonuclease Z (Ligilactobacillus salivarius (strain UCC118) (Lactobacillus salivarius)).